The primary structure comprises 51 residues: Insulin (51 aa).

3 cysteine pairs are disulfide-bonded: Cys-8-Cys-37, Cys-20-Cys-50, and Cys-36-Cys-41.

Belongs to the insulin family. Heterodimer of a B chain and an A chain linked by two disulfide bonds.

The protein resides in the secreted. Its function is as follows. Insulin decreases blood glucose concentration. It increases cell permeability to monosaccharides, amino acids and fatty acids. It accelerates glycolysis, the pentose phosphate cycle, and glycogen synthesis in liver. The chain is Insulin (ins) from Gadus morhua subsp. callarias (Baltic cod).